The sequence spans 96 residues: Large ribosomal subunit protein uL23cz (96 aa).

Belongs to the universal ribosomal protein uL23 family. As to quaternary structure, part of the 50S ribosomal subunit.

It is found in the plastid. The protein localises to the chloroplast. In terms of biological role, binds to 23S rRNA. This Sorghum bicolor (Sorghum) protein is Large ribosomal subunit protein uL23cz (rpl23-A).